Consider the following 238-residue polypeptide: Ribonuclease PH (238 aa).

Phosphate contacts are provided by residues arginine 86 and 124–126 (GTR).

It belongs to the RNase PH family. As to quaternary structure, homohexameric ring arranged as a trimer of dimers.

It carries out the reaction tRNA(n+1) + phosphate = tRNA(n) + a ribonucleoside 5'-diphosphate. Phosphorolytic 3'-5' exoribonuclease that plays an important role in tRNA 3'-end maturation. Removes nucleotide residues following the 3'-CCA terminus of tRNAs; can also add nucleotides to the ends of RNA molecules by using nucleoside diphosphates as substrates, but this may not be physiologically important. Probably plays a role in initiation of 16S rRNA degradation (leading to ribosome degradation) during starvation. The polypeptide is Ribonuclease PH (Alkalilimnicola ehrlichii (strain ATCC BAA-1101 / DSM 17681 / MLHE-1)).